The primary structure comprises 98 residues: NADH-ubiquinone oxidoreductase chain 4L (98 aa).

3 consecutive transmembrane segments (helical) span residues 1 to 21 (MSLI…GLLM), 29 to 49 (ALLC…LTAL), and 59 to 79 (MPII…ALLV).

Belongs to the complex I subunit 4L family. As to quaternary structure, core subunit of respiratory chain NADH dehydrogenase (Complex I) which is composed of 45 different subunits.

The protein resides in the mitochondrion inner membrane. It catalyses the reaction a ubiquinone + NADH + 5 H(+)(in) = a ubiquinol + NAD(+) + 4 H(+)(out). Its function is as follows. Core subunit of the mitochondrial membrane respiratory chain NADH dehydrogenase (Complex I) which catalyzes electron transfer from NADH through the respiratory chain, using ubiquinone as an electron acceptor. Part of the enzyme membrane arm which is embedded in the lipid bilayer and involved in proton translocation. This is NADH-ubiquinone oxidoreductase chain 4L (MT-ND4L) from Hyperoodon ampullatus (Northern bottlenose whale).